The sequence spans 598 residues: MAGEGRRAEAVREGWGVYVTPRAPIREGRGRLAPQNGGSSDAPAYRTSLSRQGRREVRFSDEPPEVYGDFEPLVDKERSPVGKRTRLEEFRSDSAKEEVRESAYYLRSRQRRQPRPQEAEEMKTRRTTRLQQQHSQQPPLQPSPVMTRRGLRDSHSSEEDEPSSPTDLSQTISKKTVRSIQEAPAESEDLVISLRRPPLRYPRSEATSVQQKVNFSEEGETEDDQDSSHSSVTTVKSRSRDSDESGDKTTRSSSQYIESFWQSSQSQNFTAHDKQPSVLSSGYQKTPQEWAPQTARMRTRMQTSSPGKSSIYGSFSDDDSILKSELGNQSPSTSSQQVTGQPQNASFVKRNWWWLLPLIAALASGSFWFFSTPEVETTAVQEFQNQMNQLKNKYQGQDEKLWKRSQTFLEKHLNSSHPRSQPAILLLTAARDAEEALRCLSEQIADAYSSFHSVRAIRIDGTDKATQDSDTVKLEVDQELSNGLKNGQNAAVVHRFESFPAGSTLIFYKYCDHENAAFKDVALVLTVLLEEETLGTSLGLKEVEEKVRDFLKVKFTNSNTPNSYNHMDPDKLNGLWSRISHLVLPVQPENALKRGICL.

The Nuclear segment spans residues 1–351 (MAGEGRRAEA…PQNASFVKRN (351 aa)). Disordered regions lie at residues 19–254 (VTPR…RSSS) and 267–314 (QNFT…IYGS). Phosphoserine is present on Ser-60. 2 stretches are compositionally biased toward basic and acidic residues: residues 73–101 (LVDKERSPVGKRTRLEEFRSDSAKEEVRE) and 115–124 (RPQEAEEMKT). Ser-135, Ser-143, Ser-154, Ser-156, Ser-157, and Ser-187 each carry phosphoserine. Residues 205–214 (EATSVQQKVN) are compositionally biased toward polar residues. The residue at position 216 (Ser-216) is a Phosphoserine. Position 221 is a phosphothreonine (Thr-221). Residues Ser-227, Ser-230, and Ser-242 each carry the phosphoserine modification. Basic and acidic residues predominate over residues 238–250 (RSRDSDESGDKTT). Polar residues-rich tracts occupy residues 277–287 (SVLSSGYQKTP) and 300–313 (RMQTSSPGKSSIYG). Residue Ser-320 is modified to Phosphoserine. Residues 322-341 (LKSELGNQSPSTSSQQVTGQ) are disordered. Residue Lys-323 forms a Glycyl lysine isopeptide (Lys-Gly) (interchain with G-Cter in SUMO2) linkage. The span at 326–341 (LGNQSPSTSSQQVTGQ) shows a compositional bias: polar residues. Ser-330 bears the Phosphoserine mark. A helical membrane pass occupies residues 352 to 372 (WWWLLPLIAALASGSFWFFST). The segment at 371–598 (STPEVETTAV…ENALKRGICL (228 aa)) is interaction with TOR1A. Residues 373 to 598 (PEVETTAVQE…ENALKRGICL (226 aa)) lie on the Perinuclear space side of the membrane. Positions 374–450 (EVETTAVQEF…SEQIADAYSS (77 aa)) form a coiled coil. Asn-414 is a glycosylation site (N-linked (GlcNAc...) asparagine).

It belongs to the TOR1AIP family. As to quaternary structure, interacts with ATP1B4. Interacts with TOR1A (ATP-bound). Interacts with TOR1B, TOR2A and TOR3A.

Its subcellular location is the nucleus inner membrane. Its function is as follows. Required for nuclear membrane integrity. Induces TOR1A and TOR1B ATPase activity and is required for their location on the nuclear membrane. Binds to A- and B-type lamins. Possible role in membrane attachment and assembly of the nuclear lamina. The protein is Torsin-1A-interacting protein 1 (TOR1AIP1) of Pongo abelii (Sumatran orangutan).